Here is a 272-residue protein sequence, read N- to C-terminus: Putative hydro-lyase BRADO2538 (272 aa).

Belongs to the D-glutamate cyclase family.

This is Putative hydro-lyase BRADO2538 from Bradyrhizobium sp. (strain ORS 278).